Here is a 240-residue protein sequence, read N- to C-terminus: uncharacterized protein (240 aa).

It to H.influenzae HI_0575.

This is an uncharacterized protein from Escherichia coli (strain K12).